The primary structure comprises 206 residues: Large ribosomal subunit protein uL4 (206 aa).

The segment at 46 to 77 (GTRAQKDREQVRHSTKKPFKQKGTGRARAGMT) is disordered. The segment covering 58 to 70 (HSTKKPFKQKGTG) has biased composition (basic residues).

It belongs to the universal ribosomal protein uL4 family. In terms of assembly, part of the 50S ribosomal subunit.

Its function is as follows. One of the primary rRNA binding proteins, this protein initially binds near the 5'-end of the 23S rRNA. It is important during the early stages of 50S assembly. It makes multiple contacts with different domains of the 23S rRNA in the assembled 50S subunit and ribosome. Functionally, forms part of the polypeptide exit tunnel. This chain is Large ribosomal subunit protein uL4, found in Polaromonas sp. (strain JS666 / ATCC BAA-500).